Reading from the N-terminus, the 118-residue chain is UPF0329 protein ECU03_0030/ECU05_0040/ECU06_0010/ECU06_1710/ECU11_0010 (118 aa).

This sequence belongs to the UPF0329 family.

The sequence is that of UPF0329 protein ECU03_0030/ECU05_0040/ECU06_0010/ECU06_1710/ECU11_0010 from Encephalitozoon cuniculi (strain GB-M1) (Microsporidian parasite).